We begin with the raw amino-acid sequence, 122 residues long: MALDVNAIVDQLKESSILELNDLVKAIEEEFGVSAAAPVAAAGAAGADAAAEKDSFTVELSEIGQEKVKVIKAVREITGLGLKDAKGLVDNAPSALKEDVSKDEAEEMKAKLEEVGAVVNLK.

The protein belongs to the bacterial ribosomal protein bL12 family. Homodimer. Part of the ribosomal stalk of the 50S ribosomal subunit. Forms a multimeric L10(L12)X complex, where L10 forms an elongated spine to which 2 to 4 L12 dimers bind in a sequential fashion. Binds GTP-bound translation factors.

In terms of biological role, forms part of the ribosomal stalk which helps the ribosome interact with GTP-bound translation factors. Is thus essential for accurate translation. This Latilactobacillus sakei subsp. sakei (strain 23K) (Lactobacillus sakei subsp. sakei) protein is Large ribosomal subunit protein bL12.